Here is a 309-residue protein sequence, read N- to C-terminus: ATP-dependent Clp protease proteolytic subunit 3, chloroplastic (309 aa).

A chloroplast-targeting transit peptide spans 1-70; sequence MEMSLRLASS…WDVSSFSIDS (70 aa). Position 71 is an N-acetylvaline (valine 71). The active-site Nucleophile is serine 164. Residue histidine 189 is part of the active site. Residue threonine 194 is modified to Phosphothreonine. The disordered stretch occupies residues 290 to 309; the sequence is DNTNLPSERSMTQNGYAAIE. The segment covering 292 to 309 has biased composition (polar residues); sequence TNLPSERSMTQNGYAAIE.

This sequence belongs to the peptidase S14 family. As to quaternary structure, component of the chloroplastic Clp protease core complex which consist of at least 16 proteins: CLPP4 (3 copies), CLPP5 (3 copies), CLPR4 (2 copies), ClpP1 (1 copy), CLPP6 (1 copy), CLPR2 (1 copy), CLPT1 (1 copy), CLPT2 (1 copy) and 3 copies of CLPP3 and/or CLPR1 and/or CLPR3. The core complex is organized in two heptameric rings, one containing CLPP3,4,5,6 in a 1:2:3:1 ratio and the other CLPP1 and CLPR1,2,3,4 in a 3:1:1:1:1 ratio. Interacts with CHIP. Ubiquitinated in vitro by CHIP. Mostly expressed in leaves. Also detected in stems, and to a lower extent, in roots (at protein level).

Its subcellular location is the plastid. It localises to the chloroplast stroma. It catalyses the reaction Hydrolysis of proteins to small peptides in the presence of ATP and magnesium. alpha-casein is the usual test substrate. In the absence of ATP, only oligopeptides shorter than five residues are hydrolyzed (such as succinyl-Leu-Tyr-|-NHMec, and Leu-Tyr-Leu-|-Tyr-Trp, in which cleavage of the -Tyr-|-Leu- and -Tyr-|-Trp bonds also occurs).. In terms of biological role, cleaves peptides in various proteins in a process that requires ATP hydrolysis. Has a chymotrypsin-like activity. Plays a major role in the degradation of misfolded proteins. In the absence of CLPP3, modified ClpPR core(s) could be formed, albeit at strongly reduced levels. In Arabidopsis thaliana (Mouse-ear cress), this protein is ATP-dependent Clp protease proteolytic subunit 3, chloroplastic.